We begin with the raw amino-acid sequence, 423 residues long: UDP-N-acetylglucosamine 1-carboxyvinyltransferase (423 aa).

22–23 serves as a coordination point for phosphoenolpyruvate; sequence KN. R98 contributes to the UDP-N-acetyl-alpha-D-glucosamine binding site. C122 acts as the Proton donor in catalysis. C122 bears the 2-(S-cysteinyl)pyruvic acid O-phosphothioketal mark. UDP-N-acetyl-alpha-D-glucosamine is bound by residues 127–131, D311, and I333; that span reads RPVDQ.

The protein belongs to the EPSP synthase family. MurA subfamily.

The protein localises to the cytoplasm. It catalyses the reaction phosphoenolpyruvate + UDP-N-acetyl-alpha-D-glucosamine = UDP-N-acetyl-3-O-(1-carboxyvinyl)-alpha-D-glucosamine + phosphate. It participates in cell wall biogenesis; peptidoglycan biosynthesis. In terms of biological role, cell wall formation. Adds enolpyruvyl to UDP-N-acetylglucosamine. The chain is UDP-N-acetylglucosamine 1-carboxyvinyltransferase from Stenotrophomonas maltophilia (strain K279a).